The sequence spans 92 residues: Small ribosomal subunit protein uS19c (92 aa).

Belongs to the universal ribosomal protein uS19 family.

The protein localises to the plastid. The protein resides in the chloroplast. Its function is as follows. Protein S19 forms a complex with S13 that binds strongly to the 16S ribosomal RNA. This Phaeodactylum tricornutum (strain CCAP 1055/1) protein is Small ribosomal subunit protein uS19c.